The primary structure comprises 164 residues: Protein SprT (164 aa).

The region spanning 14–156 is the SprT-like domain; sequence QQAETFFKRP…LCKRCRAILV (143 aa). His-69 provides a ligand contact to Zn(2+). Residue Glu-70 is part of the active site. Position 73 (His-73) interacts with Zn(2+).

Belongs to the SprT family. The cofactor is Zn(2+).

Its subcellular location is the cytoplasm. The chain is Protein SprT from Pseudomonas putida (strain GB-1).